A 267-amino-acid polypeptide reads, in one-letter code: 3-oxoadipate enol-lactonase 2 (267 aa).

The enzyme catalyses (4,5-dihydro-5-oxofuran-2-yl)-acetate + H2O = 3-oxoadipate + H(+). The protein operates within aromatic compound metabolism; beta-ketoadipate pathway; 3-oxoadipate from 5-oxo-4,5-dihydro-2-furylacetate: step 1/1. The polypeptide is 3-oxoadipate enol-lactonase 2 (catD) (Acinetobacter baylyi (strain ATCC 33305 / BD413 / ADP1)).